An 886-amino-acid chain; its full sequence is DNA double-strand break repair Rad50 ATPase (886 aa).

ATP contacts are provided by residues 32–38 (NGAGKSS) and glutamine 137. Coiled-coil stretches lie at residues 181–240 (IRSL…KEIK) and 320–416 (RKKE…GDLN). Residues 391–489 (IKDVSDRINQ…EREELEATRN (99 aa)) enclose the Zinc-hook domain. Zn(2+) contacts are provided by cysteine 437 and cysteine 440. Coiled coils occupy residues 450-657 (AKIR…ISEL) and 682-718 (EADK…EESK).

This sequence belongs to the SMC family. RAD50 subfamily. As to quaternary structure, homodimer. Forms a heterotetramer composed of two Mre11 subunits and two Rad50 subunits. Interacts with Mre11 and HerA. Requires Zn(2+) as cofactor.

Its function is as follows. Part of the Rad50/Mre11 complex, which is involved in the early steps of DNA double-strand break (DSB) repair. The complex may facilitate opening of the processed DNA ends to aid in the recruitment of HerA and NurA. Rad50 controls the balance between DNA end bridging and DNA resection via ATP-dependent structural rearrangements of the Rad50/Mre11 complex. The chain is DNA double-strand break repair Rad50 ATPase from Sulfolobus acidocaldarius (strain ATCC 33909 / DSM 639 / JCM 8929 / NBRC 15157 / NCIMB 11770).